The primary structure comprises 333 residues: MIAVLFLAILCLEIDSTAPTLDPSLDVQWNEWRTKHGKAYNVNEERLRRAVWEKNFKMIELHNWEYLEGKHDFTMTMNAFGDLTNTEFVKMMTGFRRQKIKRMHVFQDHQFLYVPKYVDWRMLGYVTPVKNQGYCASSWAFSATGSLEGQMFKKTGRLVPLSEQNLLDCMGSNVTHDCSGGFMQNAFQYVKDNGGLATEESYPYIGPGRKCRYHAENSAANVRDFVQIPGREEALMKAVAKVGPISVAVDASHDSFQFYDSGIYYEPQCKRVHLNHAVLVVGYGFEGEESDGNSYWLVKNSWGEEWGMKGYIKIAKDWNNHCGIATLATYPIV.

Residues 1-17 (MIAVLFLAILCLEIDST) form the signal peptide. Disulfide bonds link C135–C178, C169–C211, and C269–C322. An N-linked (GlcNAc...) asparagine glycan is attached at N173. Residues H276 and N300 contribute to the active site.

This sequence belongs to the peptidase C1 family. In terms of tissue distribution, expressed in testis and ovary. Low level in spleen, epididymis, kidney, and uterus. Expressed in primary cultures of Sertoli cells.

The protein resides in the secreted. This Mus musculus (Mouse) protein is Testin-2.